The chain runs to 351 residues: 5-deoxyribose 1-phosphate isomerase (351 aa).

Residues 48–50, Arg91, and Gln198 each bind substrate; that span reads RGA. The Proton donor role is filled by Asp239. Residue 249 to 250 coordinates substrate; that stretch reads NK.

This sequence belongs to the EIF-2B alpha/beta/delta subunits family. DrdI subfamily.

It catalyses the reaction 5-deoxy-alpha-D-ribose 1-phosphate = 5-deoxy-D-ribulose 1-phosphate. It participates in carbohydrate degradation. In terms of biological role, catalyzes the isomerization of 5-deoxy-alpha-D-ribose 1-phosphate to 5-deoxy-D-ribulose 1-phosphate, as part of a 5-deoxyribose salvage pathway that recycles this toxic radical SAM enzyme by-product to mainstream metabolites. This Moorella thermoacetica (strain ATCC 39073 / JCM 9320) protein is 5-deoxyribose 1-phosphate isomerase.